A 240-amino-acid chain; its full sequence is Chromatin structure-remodeling complex protein BSH (240 aa).

This sequence belongs to the SNF5 family. Interacts with SWI3A and SWI3B, but not with BRM. In terms of tissue distribution, expressed in roots, stems, leaves, flowers and siliques.

The protein resides in the nucleus. Functionally, component of a multiprotein complex equivalent of the yeast SWI/SNF complex, an ATP-dependent chromatin-remodeling complex, which is required for the positive and negative regulation of gene expression of a large number of genes. It changes chromatin structure by altering DNA-histone contacts within a nucleosome, leading eventually to a change in nucleosome position, thus facilitating or repressing binding of gene-specific transcription factors. The polypeptide is Chromatin structure-remodeling complex protein BSH (BSH) (Arabidopsis thaliana (Mouse-ear cress)).